The following is a 144-amino-acid chain: Protein BUD31 homolog (144 aa).

The Nuclear localization signal signature appears at 2–10 (PKVRRSRKP).

The protein belongs to the BUD31 (G10) family.

Its subcellular location is the nucleus. The sequence is that of Protein BUD31 homolog from Branchiostoma belcheri (Amphioxus).